The chain runs to 326 residues: Pantothenate kinase (326 aa).

An ATP-binding site is contributed by 104–111; it reads GSVAVGKS.

The protein belongs to the prokaryotic pantothenate kinase family.

The protein localises to the cytoplasm. The catalysed reaction is (R)-pantothenate + ATP = (R)-4'-phosphopantothenate + ADP + H(+). Its pathway is cofactor biosynthesis; coenzyme A biosynthesis; CoA from (R)-pantothenate: step 1/5. The polypeptide is Pantothenate kinase (Parvibaculum lavamentivorans (strain DS-1 / DSM 13023 / NCIMB 13966)).